Reading from the N-terminus, the 115-residue chain is Large ribosomal subunit protein bL20c (115 aa).

The protein belongs to the bacterial ribosomal protein bL20 family.

It is found in the plastid. The protein resides in the chloroplast. Binds directly to 23S ribosomal RNA and is necessary for the in vitro assembly process of the 50S ribosomal subunit. It is not involved in the protein synthesizing functions of that subunit. In Pyropia yezoensis (Susabi-nori), this protein is Large ribosomal subunit protein bL20c.